The following is a 349-amino-acid chain: Glycine-rich cell wall structural protein (349 aa).

A signal peptide spans 1–23 (MGKVSFGFLGLMLVVVVIGVVEC).

Its subcellular location is the secreted. The protein resides in the cell wall. In terms of biological role, responsible for plasticity of the cell wall. The sequence is that of Glycine-rich cell wall structural protein from Arabidopsis thaliana (Mouse-ear cress).